Here is a 155-residue protein sequence, read N- to C-terminus: uncharacterized protein (155 aa).

Disordered regions lie at residues 1–22 (MSSQ…TFTF) and 110–155 (NKEP…DTQA). S2 carries the N-acetylserine modification. 3 positions are modified to phosphoserine: S136, S144, and S146. Positions 136–155 (SDEDLDAESDSDGEDGDTQA) are enriched in acidic residues.

This is an uncharacterized protein from Mus musculus (Mouse).